Consider the following 164-residue polypeptide: Interferon gamma (164 aa).

An N-terminal signal peptide occupies residues 1–19; it reads MTCQTYNLFVLSVIMIYYG. Asn-42 and Asn-61 each carry an N-linked (GlcNAc...) asparagine glycan.

The protein belongs to the type II (or gamma) interferon family. As to quaternary structure, homodimer.

It localises to the secreted. Produced by lymphocytes activated by specific antigens or mitogens. IFN-gamma, in addition to having antiviral activity, has important immunoregulatory functions. It is a potent activator of macrophages, it has antiproliferative effects on transformed cells and it can potentiate the antiviral and antitumor effects of the type I interferons. This Coturnix japonica (Japanese quail) protein is Interferon gamma (IFNG).